Here is a 542-residue protein sequence, read N- to C-terminus: Probable protein kinase UbiB (542 aa).

One can recognise a Protein kinase domain in the interval 123-505; it reads DFDEQALASA…ADNKTYNVKM (383 aa). Residues 129-137 and Lys-156 contribute to the ATP site; that span reads LASASIAQV. Asp-291 (proton acceptor) is an active-site residue. The helical transmembrane segment at 506–526 threads the bilayer; that stretch reads IIMGSIILSLLWQFNSLPLWL.

This sequence belongs to the ABC1 family. UbiB subfamily.

The protein resides in the cell inner membrane. It participates in cofactor biosynthesis; ubiquinone biosynthesis [regulation]. Its function is as follows. Is probably a protein kinase regulator of UbiI activity which is involved in aerobic coenzyme Q (ubiquinone) biosynthesis. This Haemophilus ducreyi (strain 35000HP / ATCC 700724) protein is Probable protein kinase UbiB.